The chain runs to 162 residues: UPF0460 protein y4xD (162 aa).

It belongs to the UPF0460 family.

The sequence is that of UPF0460 protein y4xD from Sinorhizobium fredii (strain NBRC 101917 / NGR234).